The following is a 541-amino-acid chain: Anthranilate synthase component 1 (541 aa).

Residues Ser-61 and Pro-311–Met-313 each bind L-tryptophan. Gly-348–Thr-349 provides a ligand contact to chorismate. Glu-381 contacts Mg(2+). Chorismate-binding positions include Tyr-469, Arg-489, Gly-503 to Gly-505, and Gly-505. Glu-518 contacts Mg(2+).

This sequence belongs to the anthranilate synthase component I family. Heterotetramer consisting of two non-identical subunits: a beta subunit (TrpG) and a large alpha subunit (TrpE). It depends on Mg(2+) as a cofactor.

It carries out the reaction chorismate + L-glutamine = anthranilate + pyruvate + L-glutamate + H(+). Its pathway is amino-acid biosynthesis; L-tryptophan biosynthesis; L-tryptophan from chorismate: step 1/5. Its activity is regulated as follows. Feedback inhibited by tryptophan. Functionally, part of a heterotetrameric complex that catalyzes the two-step biosynthesis of anthranilate, an intermediate in the biosynthesis of L-tryptophan. In the first step, the glutamine-binding beta subunit (TrpG) of anthranilate synthase (AS) provides the glutamine amidotransferase activity which generates ammonia as a substrate that, along with chorismate, is used in the second step, catalyzed by the large alpha subunit of AS (TrpE) to produce anthranilate. In the absence of TrpG, TrpE can synthesize anthranilate directly from chorismate and high concentrations of ammonia. The protein is Anthranilate synthase component 1 (trpE) of Vibrio parahaemolyticus serotype O3:K6 (strain RIMD 2210633).